Consider the following 156-residue polypeptide: Small ribosomal subunit protein uS7 (156 aa).

This sequence belongs to the universal ribosomal protein uS7 family. Part of the 30S ribosomal subunit. Contacts proteins S9 and S11.

Its function is as follows. One of the primary rRNA binding proteins, it binds directly to 16S rRNA where it nucleates assembly of the head domain of the 30S subunit. Is located at the subunit interface close to the decoding center, probably blocks exit of the E-site tRNA. The chain is Small ribosomal subunit protein uS7 from Tropheryma whipplei (strain TW08/27) (Whipple's bacillus).